Consider the following 227-residue polypeptide: 2,3-bisphosphoglycerate-dependent phosphoglycerate mutase (227 aa).

Residues 7 to 14, 20 to 21, arginine 59, 86 to 89, lysine 97, 113 to 114, and 182 to 183 each bind substrate; these read RHGQSEWN, TG, ERHY, RR, and GN. Histidine 8 functions as the Tele-phosphohistidine intermediate in the catalytic mechanism. Glutamate 86 functions as the Proton donor/acceptor in the catalytic mechanism.

This sequence belongs to the phosphoglycerate mutase family. BPG-dependent PGAM subfamily. As to quaternary structure, homodimer.

It catalyses the reaction (2R)-2-phosphoglycerate = (2R)-3-phosphoglycerate. The protein operates within carbohydrate degradation; glycolysis; pyruvate from D-glyceraldehyde 3-phosphate: step 3/5. Functionally, catalyzes the interconversion of 2-phosphoglycerate and 3-phosphoglycerate. This chain is 2,3-bisphosphoglycerate-dependent phosphoglycerate mutase, found in Neisseria meningitidis serogroup C (strain 053442).